The primary structure comprises 278 residues: Large ribosomal subunit protein uL2 (278 aa).

2 stretches are compositionally biased toward basic residues: residues 210-220 (GRMRWKGKRPS) and 257-278 (TRRKHKPSDKLIVRRRKSNKKR). A disordered region spans residues 210–278 (GRMRWKGKRP…VRRRKSNKKR (69 aa)).

Belongs to the universal ribosomal protein uL2 family. Part of the 50S ribosomal subunit. Forms a bridge to the 30S subunit in the 70S ribosome.

Functionally, one of the primary rRNA binding proteins. Required for association of the 30S and 50S subunits to form the 70S ribosome, for tRNA binding and peptide bond formation. It has been suggested to have peptidyltransferase activity; this is somewhat controversial. Makes several contacts with the 16S rRNA in the 70S ribosome. This is Large ribosomal subunit protein uL2 from Acidothermus cellulolyticus (strain ATCC 43068 / DSM 8971 / 11B).